A 457-amino-acid chain; its full sequence is Siroheme synthase (457 aa).

Residues Met-1–Thr-204 form a precorrin-2 dehydrogenase /sirohydrochlorin ferrochelatase region. Residues Asp-22 to Val-23 and Leu-43 to Ala-44 contribute to the NAD(+) site. A Phosphoserine modification is found at Ser-128. Residues Gly-216–His-457 form a uroporphyrinogen-III C-methyltransferase region. Pro-225 provides a ligand contact to S-adenosyl-L-methionine. The Proton acceptor role is filled by Asp-248. Lys-270 serves as the catalytic Proton donor. S-adenosyl-L-methionine is bound by residues Gly-301–Asp-303, Ile-306, Thr-331–Ala-332, Met-382, and Gly-411.

It in the N-terminal section; belongs to the precorrin-2 dehydrogenase / sirohydrochlorin ferrochelatase family. The protein in the C-terminal section; belongs to the precorrin methyltransferase family.

The enzyme catalyses uroporphyrinogen III + 2 S-adenosyl-L-methionine = precorrin-2 + 2 S-adenosyl-L-homocysteine + H(+). It carries out the reaction precorrin-2 + NAD(+) = sirohydrochlorin + NADH + 2 H(+). It catalyses the reaction siroheme + 2 H(+) = sirohydrochlorin + Fe(2+). The protein operates within cofactor biosynthesis; adenosylcobalamin biosynthesis; precorrin-2 from uroporphyrinogen III: step 1/1. It participates in cofactor biosynthesis; adenosylcobalamin biosynthesis; sirohydrochlorin from precorrin-2: step 1/1. Its pathway is porphyrin-containing compound metabolism; siroheme biosynthesis; precorrin-2 from uroporphyrinogen III: step 1/1. It functions in the pathway porphyrin-containing compound metabolism; siroheme biosynthesis; siroheme from sirohydrochlorin: step 1/1. The protein operates within porphyrin-containing compound metabolism; siroheme biosynthesis; sirohydrochlorin from precorrin-2: step 1/1. In terms of biological role, multifunctional enzyme that catalyzes the SAM-dependent methylations of uroporphyrinogen III at position C-2 and C-7 to form precorrin-2 via precorrin-1. Then it catalyzes the NAD-dependent ring dehydrogenation of precorrin-2 to yield sirohydrochlorin. Finally, it catalyzes the ferrochelation of sirohydrochlorin to yield siroheme. The sequence is that of Siroheme synthase from Escherichia fergusonii (strain ATCC 35469 / DSM 13698 / CCUG 18766 / IAM 14443 / JCM 21226 / LMG 7866 / NBRC 102419 / NCTC 12128 / CDC 0568-73).